Consider the following 313-residue polypeptide: WD repeat-containing protein 82-A (313 aa).

6 WD repeats span residues 19 to 58 (ENSD…PKRT), 105 to 144 (GHSK…CQGL), 146 to 184 (HLQG…KGPF), 192 to 231 (DRTC…VMHT), 236 to 276 (NNSK…KVAV), and 280 to 313 (KHTG…TIDD).

It belongs to the WD repeat SWD2 family. In terms of assembly, component of the SET1/COMPASS complex. Component of the PNUTS-PP1 phosphatase complex.

It is found in the nucleus. The protein resides in the chromosome. Its subcellular location is the cytoplasm. Its function is as follows. Regulatory component of the SET1/COMPASS complex implicated in the tethering of this complex to transcriptional start sites of active genes. Facilitates histone H3 'Lys-4' methylation (H3K4me) via recruitment of the SETD1A or SETD1B to the 'Ser-5' phosphorylated C-terminal domain (CTD) of RNA polymerase II large subunit (POLR2A). Component of the PNUTS-PP1 protein phosphatase complex, a protein phosphatase 1 (PP1) complex that promotes RNA polymerase II transcription pause-release, allowing transcription elongation. The sequence is that of WD repeat-containing protein 82-A (wdr82-a) from Xenopus laevis (African clawed frog).